The primary structure comprises 541 residues: Probable inorganic phosphate transporter 1-8 (541 aa).

The Cytoplasmic segment spans residues 1–28; that stretch reads MARQEQQQHLQVLSALDAAKTQWYHFTA. Residues 29-49 form a helical membrane-spanning segment; the sequence is IVVAGMGFFTDAYDLFCISLV. At 50-74 the chain is on the extracellular side; sequence TKLLGRIYYTDLAKENPGSLPPNVA. Residues 75–95 traverse the membrane as a helical segment; the sequence is AAVNGVAFCGTLAGQLFFGWL. Topologically, residues 96–102 are cytoplasmic; sequence GDKLGRK. A helical membrane pass occupies residues 103–123; the sequence is SVYGMTLLMMVICSIASGLSF. The Extracellular segment spans residues 124 to 126; that stretch reads SHT. Residues 127–147 form a helical membrane-spanning segment; the sequence is PTSVMATLCFFRFWLGFGIGG. The Cytoplasmic portion of the chain corresponds to 148 to 168; the sequence is DYPLSATIMSEYANKKTRGAF. The chain crosses the membrane as a helical span at residues 169-189; it reads IAAVFAMQGFGILAGGIVTLI. Over 190–215 the chain is Extracellular; that stretch reads ISSAFRAGFPAPAYQDDRAGSTVRQA. Residues 216 to 236 form a helical membrane-spanning segment; it reads DYVWRIILMLGAMPALLTYYW. Over 237–297 the chain is Cytoplasmic; that stretch reads RMKMPETARY…GLFSRQFARR (61 aa). Residues 298 to 318 form a helical membrane-spanning segment; sequence HGLHLVGTATTWFLLDIAFYS. The Extracellular segment spans residues 319-353; it reads QNLFQKDIFTSINWIPKAKTMSALEEVFRIARAQT. The helical transmembrane segment at 354 to 374 threads the bilayer; the sequence is LIALCGTVPGYWFTVFLIDIV. The Cytoplasmic portion of the chain corresponds to 375 to 376; sequence GR. Residues 377-397 traverse the membrane as a helical segment; the sequence is FAIQLLGFFMMTVFMLGLAVP. The Extracellular portion of the chain corresponds to 398-404; sequence YHHWTTK. The chain crosses the membrane as a helical span at residues 405 to 425; that stretch reads GNHIGFVVMYAFTFFFANFGP. Over 426 to 447 the chain is Cytoplasmic; the sequence is NSTTFIVPAEIFPARLRSTCHG. Residues 448-468 traverse the membrane as a helical segment; the sequence is ISAAAGKAGAIIGSFGFLYAA. The Extracellular segment spans residues 469–486; it reads QDPHKPDAGYKPGIGVRN. Residues 487–507 traverse the membrane as a helical segment; that stretch reads SLFVLAGCNLLGFICTFLVPE. The Cytoplasmic portion of the chain corresponds to 508 to 541; that stretch reads SKGKSLEEMSGEAEDDDDEVAAAGGGAAVRPQTA. The disordered stretch occupies residues 514–541; the sequence is EEMSGEAEDDDDEVAAAGGGAAVRPQTA. Acidic residues predominate over residues 516-527; sequence MSGEAEDDDDEV.

This sequence belongs to the major facilitator superfamily. Phosphate:H(+) symporter (TC 2.A.1.9) family.

The protein resides in the membrane. Functionally, high-affinity transporter for external inorganic phosphate. The protein is Probable inorganic phosphate transporter 1-8 (PHT1-8) of Oryza sativa subsp. japonica (Rice).